Here is a 195-residue protein sequence, read N- to C-terminus: Imidazoleglycerol-phosphate dehydratase (195 aa).

The protein belongs to the imidazoleglycerol-phosphate dehydratase family.

The protein resides in the cytoplasm. The catalysed reaction is D-erythro-1-(imidazol-4-yl)glycerol 3-phosphate = 3-(imidazol-4-yl)-2-oxopropyl phosphate + H2O. Its pathway is amino-acid biosynthesis; L-histidine biosynthesis; L-histidine from 5-phospho-alpha-D-ribose 1-diphosphate: step 6/9. The polypeptide is Imidazoleglycerol-phosphate dehydratase (Burkholderia multivorans (strain ATCC 17616 / 249)).